Consider the following 421-residue polypeptide: Enolase 1 (421 aa).

(2R)-2-phosphoglycerate is bound at residue Q164. E206 functions as the Proton donor in the catalytic mechanism. 3 residues coordinate Mg(2+): D243, E287, and D314. (2R)-2-phosphoglycerate contacts are provided by K339, R368, S369, and K390. Catalysis depends on K339, which acts as the Proton acceptor.

This sequence belongs to the enolase family. As to quaternary structure, component of the RNA degradosome, a multiprotein complex involved in RNA processing and mRNA degradation. The cofactor is Mg(2+).

It localises to the cytoplasm. It is found in the secreted. Its subcellular location is the cell surface. The catalysed reaction is (2R)-2-phosphoglycerate = phosphoenolpyruvate + H2O. Its pathway is carbohydrate degradation; glycolysis; pyruvate from D-glyceraldehyde 3-phosphate: step 4/5. Its function is as follows. Catalyzes the reversible conversion of 2-phosphoglycerate (2-PG) into phosphoenolpyruvate (PEP). It is essential for the degradation of carbohydrates via glycolysis. In Methylococcus capsulatus (strain ATCC 33009 / NCIMB 11132 / Bath), this protein is Enolase 1.